The sequence spans 415 residues: Zona pellucida-like domain-containing protein 1 (415 aa).

An N-terminal signal peptide occupies residues 1–19 (MEQIRLLLLLTIRVLSGSA). Residues 20–372 (QFNGYNCDAN…PPFQLNAITS (353 aa)) are Extracellular-facing. The 278-residue stretch at 43 to 320 (YCGVQAITMK…PICSHRERRD (278 aa)) folds into the ZP domain. Intrachain disulfides connect C44–C155 and C79–C104. N-linked (GlcNAc...) asparagine glycosylation is present at N164. 2 disulfides stabilise this stretch: C235/C296 and C255/C313. Residues 323-359 (RRTTWSSQSSSGSAVLSAGPIITRSDETPTNNSQLGS) form a disordered region. Positions 328-339 (SSQSSSGSAVLS) are enriched in low complexity. The span at 350-359 (TPTNNSQLGS) shows a compositional bias: polar residues. A helical transmembrane segment spans residues 373-393 (ALISGMVILGVMSFSLLVCPL). Topologically, residues 394 to 415 (ALLHRKGPTSLVLNGIRNPVFD) are cytoplasmic.

Post-translationally, proteolytically cleaved before the transmembrane segment to yield the secreted form found in the extracellular matrix of the cupula.

The protein resides in the cytoplasmic vesicle membrane. The protein localises to the secreted. It is found in the extracellular space. Its subcellular location is the extracellular matrix. In terms of biological role, glycoprotein which is a component of the gelatinous extracellular matrix in the cupulae of the vestibular organ. The protein is Zona pellucida-like domain-containing protein 1 (ZPLD1) of Macaca fascicularis (Crab-eating macaque).